The sequence spans 132 residues: ATP synthase epsilon chain (132 aa).

This sequence belongs to the ATPase epsilon chain family. As to quaternary structure, F-type ATPases have 2 components, CF(1) - the catalytic core - and CF(0) - the membrane proton channel. CF(1) has five subunits: alpha(3), beta(3), gamma(1), delta(1), epsilon(1). CF(0) has three main subunits: a, b and c.

The protein localises to the cell inner membrane. Functionally, produces ATP from ADP in the presence of a proton gradient across the membrane. This is ATP synthase epsilon chain from Anaeromyxobacter dehalogenans (strain 2CP-1 / ATCC BAA-258).